The chain runs to 324 residues: Glyoxylate/hydroxypyruvate reductase B (324 aa).

Active-site residues include Arg-237 and Glu-266. His-285 acts as the Proton donor in catalysis.

It belongs to the D-isomer specific 2-hydroxyacid dehydrogenase family. GhrB subfamily. As to quaternary structure, homodimer.

The protein resides in the cytoplasm. It catalyses the reaction glycolate + NADP(+) = glyoxylate + NADPH + H(+). The enzyme catalyses (R)-glycerate + NAD(+) = 3-hydroxypyruvate + NADH + H(+). The catalysed reaction is (R)-glycerate + NADP(+) = 3-hydroxypyruvate + NADPH + H(+). Catalyzes the NADPH-dependent reduction of glyoxylate and hydroxypyruvate into glycolate and glycerate, respectively. The sequence is that of Glyoxylate/hydroxypyruvate reductase B from Citrobacter koseri (strain ATCC BAA-895 / CDC 4225-83 / SGSC4696).